Here is a 160-residue protein sequence, read N- to C-terminus: Cytochrome b6-f complex subunit 4 (160 aa).

The next 3 helical transmembrane spans lie at 36-56 (ILFTFPICIAGTIGLITGLAI), 95-115 (LLGIACQGAIPLGLMMVPFIE), and 131-151 (AVFLFGTAVTLWLGAGACFPI).

This sequence belongs to the cytochrome b family. PetD subfamily. The 4 large subunits of the cytochrome b6-f complex are cytochrome b6, subunit IV (17 kDa polypeptide, PetD), cytochrome f and the Rieske protein, while the 4 small subunits are PetG, PetL, PetM and PetN. The complex functions as a dimer.

The protein resides in the cellular thylakoid membrane. Functionally, component of the cytochrome b6-f complex, which mediates electron transfer between photosystem II (PSII) and photosystem I (PSI), cyclic electron flow around PSI, and state transitions. In Picosynechococcus sp. (strain ATCC 27264 / PCC 7002 / PR-6) (Agmenellum quadruplicatum), this protein is Cytochrome b6-f complex subunit 4.